We begin with the raw amino-acid sequence, 89 residues long: MAITQERKTQLINEFKTHESDTGSPEVQIAILTDQINNLNEHLRTHKKDHHSRRGLLKMVGKRRNLLTYLRNKDVTRYRELINKLGLRR.

The protein belongs to the universal ribosomal protein uS15 family. As to quaternary structure, part of the 30S ribosomal subunit. Forms a bridge to the 50S subunit in the 70S ribosome, contacting the 23S rRNA.

Functionally, one of the primary rRNA binding proteins, it binds directly to 16S rRNA where it helps nucleate assembly of the platform of the 30S subunit by binding and bridging several RNA helices of the 16S rRNA. Forms an intersubunit bridge (bridge B4) with the 23S rRNA of the 50S subunit in the ribosome. The sequence is that of Small ribosomal subunit protein uS15 from Bacillus licheniformis (strain ATCC 14580 / DSM 13 / JCM 2505 / CCUG 7422 / NBRC 12200 / NCIMB 9375 / NCTC 10341 / NRRL NRS-1264 / Gibson 46).